The primary structure comprises 1551 residues: MSKRVLIIAVVVYLVFTTQNQITGNHTTINSSSPSTTEASSTPTVSRTPQTTTTSTAVSTTITATTTPTASWTTQSQYFNKTTQHHWREETMISRNPTVLDRQSRASSVRELLNTKFLMLLGFIPKGEVNHLENACNREGKNCTELILKERIARFFSETEKESCYNTYLEKHLRSVSPEVSLTPYRVLGLREDILLKEIDRRIIRFETDSQRVTCLSASLLKPDVFIREQRIDAKPSNGPKIVPVDSVACMNLEANVDVRSNKLVIQSLMTTVKISLKNCKVVVNSRQCIHQQTGSGVIKVPKFEKQQGGTWSSYIAGVYTATIDLLDENNQNCKLFTECIVKGRELVKGQSELKSFNIEVLLPRVMKTRRKLLAVTDGSTECNSGTQLIEGKSIEVHKQDIGGPGKKLTICNGTSVLDVPLDEGHGCYTINVITSKRACRPKNSKLQCSIDKELKPCDSGKCLSISQKGAGHIKVSRGKTILITECKEHCQIPVPTGKGDIMVDCSGGRQHYLEVNIVDIHCPNTKFLGGIMLYFCRMSSRPTVALLLGIWIGCGYILTCIFSFLLYHLILFFANCIKQCRKKGERLGEICVKCEQQTVNLMDQELHDLNCNFNLCPYCCNRMSDEGMSRHVGKCPKRLERLNEIELYLTTSECLCLSVCYQLLISVGIFLKRTTWLVVLLVLLGLAISPVQGAPTEVSNVKQDGDYSICYFIFGCLVTAALLLKVKRTNSNGIVVVVDSFGRCPYCNEFTDSLFEEVLHDTLCSLCVCPFCEKQALDLVTLEEHVKECYKVATRKDIFKILGRKFTNALVRREKLFTTGLQLFINKTNVVVFALIMCFLLLLTGHNASAFDSGDLPDGVWEESSQLVKSCTQFCYIEEDVCYCPAEDGVGRKLLFFNGLQNSVKRLSDSHKLLTSVSIDAPWGRINVESTWKPTLAASNIAMSWSSTDIKGEKVILSGRSTSIIKLKEKTGVMWKLVGSGLASEKKKPFRFPIMDFAQVYNSVFQYITGDRLLSEWPKAVCTGDCPHRCGCQTSTCMAKECHTQECVSTHMVLGIGTGCTCCGMDVERPFNKYLGVKWSTEYLRTEVLVCVEVTEEERHCEIVEAGTRFNIGPITITISDPQNIGSKLPESLMTVQEIDDSNFVDIMHVGNVISADNSCRLQSCTHGSAVTTRFTALTALIKDDHSSGLNLAVLDPKVNSSWLSWEGCDMDYYCNVGDWPTCTYTGVVTQKLREFLKLDQHRKRLHTTLSFSLKKNLSKRSHTSVRLEGKTVTRMEVKVTALIEVDGMELHSKTIRLSGIRLTGLKCSGCFSCTSGISCSVNAKLTSPDEFTLHLRSTSPNVVVAETSIIARKGPSATTSRFKVFSVRDTKKICFEVVEREYCKDCTPDELTTCTGVELEPTKDILLEHRGTIVQHQNDTCKSKIDCWSNSISSFASGIGDFFKHYIGSIAVGVLGTVLPFALLILFFIYGDKMLWPFKVFCRPCRRCCRKNEGYNKLAEEEELRDIIRKFSKSGELINKDAKDKRTLARLFMSDNPKLKKEKKLSEIA.

Positions 1-17 (MSKRVLIIAVVVYLVFT) are cleaved as a signal peptide. Topologically, residues 18 to 546 (TQNQITGNHT…CRMSSRPTVA (529 aa)) are lumenal. The tract at residues 24–66 (GNHTTINSSSPSTTEASSTPTVSRTPQTTTTSTAVSTTITATT) is disordered. N-linked (GlcNAc...) asparagine; by host glycans are attached at residues N25 and N30. The segment covering 31–66 (SSSPSTTEASSTPTVSRTPQTTTTSTAVSTTITATT) has biased composition (low complexity). N80, N142, and N413 each carry an N-linked (GlcNAc...) asparagine; by host glycan. Residues 547 to 567 (LLLGIWIGCGYILTCIFSFLL) traverse the membrane as a helical segment. The Cytoplasmic portion of the chain corresponds to 568-675 (YHLILFFANC…ISVGIFLKRT (108 aa)). The chain crosses the membrane as a helical span at residues 676 to 696 (TWLVVLLVLLGLAISPVQGAP). The Lumenal portion of the chain corresponds to 697–704 (TEVSNVKQ). Residues 705–725 (DGDYSICYFIFGCLVTAALLL) form a helical membrane-spanning segment. The Cytoplasmic segment spans residues 726-823 (KVKRTNSNGI…REKLFTTGLQ (98 aa)). A helical membrane pass occupies residues 824–844 (LFINKTNVVVFALIMCFLLLL). The Lumenal segment spans residues 845–1451 (TGHNASAFDS…GDFFKHYIGS (607 aa)). N-linked (GlcNAc...) asparagine; by host glycans are attached at residues N848, N1201, N1258, and N1420. Cysteines 1023 and 1216 form a disulfide. A helical membrane pass occupies residues 1452 to 1472 (IAVGVLGTVLPFALLILFFIY). The Cytoplasmic segment spans residues 1473-1551 (GDKMLWPFKV…KKEKKLSEIA (79 aa)).

The protein belongs to the nairovirus envelope glycoprotein family. In terms of assembly, heterodimer with glycoprotein C; in prefusion state. As to quaternary structure, heterodimer with glycoprotein N; in prefusion state. Homotrimeric; in postfusion state. Post-translationally, specific enzymatic cleavage by host MBTPS1/S1P/SKI-1 endopeptidase yield glycoprotein N. Specific enzymatic cleavages by host furin-like protease and MBTPS1/S1P endopeptidase yield GP38. In terms of processing, glycosylated.

The protein resides in the host endoplasmic reticulum membrane. It localises to the virion membrane. It is found in the host Golgi apparatus membrane. Its function is as follows. Glycoprotein N and glycoprotein C interact with each other and are present at the surface of the virion. Glycoprotein N probably locks the Gn-Gc complex in a prefusion state. Glycoprotein N and glycoprotein C are able to attach the virion to host cell receptors. This attachment induces virion internalization predominantly through clathrin-dependent endocytosis. In terms of biological role, glycoprotein C and glycoprotein N interact with each other and are present at the surface of the virion. The spikes at the surface of the virion are formed by an N-terminal extension of glycoprotein C. Glycoprotein N and glycoprotein C are able to attach the virion to host cell receptors. This attachment induces virion internalization predominantly through clathrin-dependent endocytosis. Class II fusion protein that promotes fusion of viral membrane with host endosomal membrane after endocytosis of the virion. Exposure to potassium is necessary for the conformational change leading to fusion. The sequence is that of Envelopment polyprotein (GP) from Amblyomma variegatum (Tropical bont tick).